A 440-amino-acid polypeptide reads, in one-letter code: GTPase Obg (440 aa).

In terms of domain architecture, Obg spans 5–163 (STFVDQTKIE…RTLRLELKVL (159 aa)). The OBG-type G domain maps to 164-338 (ADVGLVGFPS…LMSRAADLVS (175 aa)). GTP-binding positions include 170-177 (GFPSVGKS), 195-199 (FTTLK), 217-220 (DLPG), 288-291 (SQMD), and 319-321 (SSV). Residues S177 and T197 each coordinate Mg(2+). Residues 362–440 (YHRPEKMEFT…IGDFSFEFVQ (79 aa)) enclose the OCT domain.

Belongs to the TRAFAC class OBG-HflX-like GTPase superfamily. OBG GTPase family. Monomer. Mg(2+) is required as a cofactor.

Its subcellular location is the cytoplasm. In terms of biological role, an essential GTPase which binds GTP, GDP and possibly (p)ppGpp with moderate affinity, with high nucleotide exchange rates and a fairly low GTP hydrolysis rate. Plays a role in control of the cell cycle, stress response, ribosome biogenesis and in those bacteria that undergo differentiation, in morphogenesis control. The polypeptide is GTPase Obg (Lactobacillus delbrueckii subsp. bulgaricus (strain ATCC BAA-365 / Lb-18)).